A 368-amino-acid polypeptide reads, in one-letter code: UDP-N-acetylenolpyruvoylglucosamine reductase (368 aa).

One can recognise an FAD-binding PCMH-type domain in the interval 32–199 (IGGKPRSAVR…LAIELQLLTD (168 aa)). The active site involves arginine 177. Serine 257 acts as the Proton donor in catalysis. Glutamate 358 is an active-site residue.

The protein belongs to the MurB family. Requires FAD as cofactor.

The protein localises to the cytoplasm. It carries out the reaction UDP-N-acetyl-alpha-D-muramate + NADP(+) = UDP-N-acetyl-3-O-(1-carboxyvinyl)-alpha-D-glucosamine + NADPH + H(+). It participates in cell wall biogenesis; peptidoglycan biosynthesis. Its function is as follows. Cell wall formation. The chain is UDP-N-acetylenolpyruvoylglucosamine reductase from Corynebacterium glutamicum (strain R).